Here is a 352-residue protein sequence, read N- to C-terminus: Fe(3+) ions import ATP-binding protein FbpC (352 aa).

Residues 5–239 form the ABC transporter domain; that stretch reads LHIGHLSKSF…PADLDAALFI (235 aa). 37 to 44 is a binding site for ATP; that stretch reads GASGCGKT.

This sequence belongs to the ABC transporter superfamily. Fe(3+) ion importer (TC 3.A.1.10) family. The complex is composed of two ATP-binding proteins (FbpC), two transmembrane proteins (FbpB) and a solute-binding protein (FbpA).

It localises to the cell inner membrane. It catalyses the reaction Fe(3+)(out) + ATP + H2O = Fe(3+)(in) + ADP + phosphate + H(+). Part of the ABC transporter complex FbpABC involved in Fe(3+) ions import. Responsible for energy coupling to the transport system. The polypeptide is Fe(3+) ions import ATP-binding protein FbpC (Neisseria gonorrhoeae (strain ATCC 700825 / FA 1090)).